A 704-amino-acid chain; its full sequence is Elongation factor G (704 aa).

The tr-type G domain maps to 8–291 (DRVRNIGIMA…AVIEYLASPV (284 aa)). GTP is bound by residues 17–24 (AHIDAGKT), 90–94 (DTPGH), and 144–147 (NKMD).

This sequence belongs to the TRAFAC class translation factor GTPase superfamily. Classic translation factor GTPase family. EF-G/EF-2 subfamily.

It localises to the cytoplasm. In terms of biological role, catalyzes the GTP-dependent ribosomal translocation step during translation elongation. During this step, the ribosome changes from the pre-translocational (PRE) to the post-translocational (POST) state as the newly formed A-site-bound peptidyl-tRNA and P-site-bound deacylated tRNA move to the P and E sites, respectively. Catalyzes the coordinated movement of the two tRNA molecules, the mRNA and conformational changes in the ribosome. In Chlorobium chlorochromatii (strain CaD3), this protein is Elongation factor G.